The sequence spans 508 residues: Tryptamine 4-monooxygenase (508 aa).

An N-terminal signal peptide occupies residues 1–19 (MIAVLFSFVIAGCIYYIVS). C439 lines the heme pocket.

This sequence belongs to the cytochrome P450 family. Heme is required as a cofactor.

The enzyme catalyses tryptamine + AH2 + O2 = 4-hydroxytryptamine + A + H2O. The protein operates within secondary metabolite biosynthesis. Cytochrome P450 monooxygenase; part of the gene cluster that mediates the biosynthesis of psilocybin, a psychotropic tryptamine-derived natural product. The first step in the pathway is the decarboxylation of L-tryptophan to tryptamine by the decarboxylase psiD. 4-hydroxy-L-tryptophan is accepted as substrate by psiD as well. The cytochrome P450 monooxygenase psiH then converts tryptamine to 4-hydroxytryptamine. The kinase psiK catalyzes the 4-O-phosphorylation step by converting 4-hydroxytryptamine into norbaeocystin. The methyltransferase psiM then catalyzes iterative methyl transfer to the amino group of norbaeocystin to yield psilocybin via a monomethylated intermediate, baeocystin. The chain is Tryptamine 4-monooxygenase from Psilocybe cubensis (Psychedelic mushroom).